The sequence spans 358 residues: tRNA(Ile)-lysidine synthase (358 aa).

35-40 (SGGPDS) contributes to the ATP binding site.

The protein belongs to the tRNA(Ile)-lysidine synthase family.

The protein resides in the cytoplasm. The enzyme catalyses cytidine(34) in tRNA(Ile2) + L-lysine + ATP = lysidine(34) in tRNA(Ile2) + AMP + diphosphate + H(+). Ligates lysine onto the cytidine present at position 34 of the AUA codon-specific tRNA(Ile) that contains the anticodon CAU, in an ATP-dependent manner. Cytidine is converted to lysidine, thus changing the amino acid specificity of the tRNA from methionine to isoleucine. The chain is tRNA(Ile)-lysidine synthase from Bradyrhizobium sp. (strain BTAi1 / ATCC BAA-1182).